A 539-amino-acid polypeptide reads, in one-letter code: Phosphoenolpyruvate carboxykinase (ATP) (539 aa).

Substrate contacts are provided by Arg-64, Tyr-206, and Lys-212. ATP contacts are provided by residues Lys-212, His-231, and Gly-247 to Thr-255. Mn(2+) is bound by residues Lys-212 and His-231. Mn(2+) is bound at residue Asp-268. ATP-binding positions include Glu-296, Arg-332, Arg-448 to Ile-449, and Thr-454. Arg-332 contributes to the substrate binding site.

The protein belongs to the phosphoenolpyruvate carboxykinase (ATP) family. In terms of assembly, monomer. It depends on Mn(2+) as a cofactor.

It is found in the cytoplasm. The enzyme catalyses oxaloacetate + ATP = phosphoenolpyruvate + ADP + CO2. It participates in carbohydrate biosynthesis; gluconeogenesis. Its function is as follows. Involved in the gluconeogenesis. Catalyzes the conversion of oxaloacetate (OAA) to phosphoenolpyruvate (PEP) through direct phosphoryl transfer between the nucleoside triphosphate and OAA. This Cronobacter sakazakii (strain ATCC BAA-894) (Enterobacter sakazakii) protein is Phosphoenolpyruvate carboxykinase (ATP).